A 476-amino-acid polypeptide reads, in one-letter code: 3-isopropylmalate dehydratase large subunit (476 aa).

Residues C353, C413, and C416 each contribute to the [4Fe-4S] cluster site.

Belongs to the aconitase/IPM isomerase family. LeuC type 1 subfamily. As to quaternary structure, heterodimer of LeuC and LeuD. [4Fe-4S] cluster serves as cofactor.

It carries out the reaction (2R,3S)-3-isopropylmalate = (2S)-2-isopropylmalate. It functions in the pathway amino-acid biosynthesis; L-leucine biosynthesis; L-leucine from 3-methyl-2-oxobutanoate: step 2/4. In terms of biological role, catalyzes the isomerization between 2-isopropylmalate and 3-isopropylmalate, via the formation of 2-isopropylmaleate. The polypeptide is 3-isopropylmalate dehydratase large subunit (Yersinia pseudotuberculosis serotype O:1b (strain IP 31758)).